The primary structure comprises 110 residues: UPF0060 membrane protein Pmen_1247 (110 aa).

Transmembrane regions (helical) follow at residues 5–25 (LWFL…WMWL), 31–51 (AWWI…LTRV), 59–79 (AYAA…ALIE), and 84–104 (MLSD…ILFA).

The protein belongs to the UPF0060 family.

Its subcellular location is the cell inner membrane. The chain is UPF0060 membrane protein Pmen_1247 from Ectopseudomonas mendocina (strain ymp) (Pseudomonas mendocina).